The chain runs to 217 residues: Glycerol-3-phosphate acyltransferase (217 aa).

5 consecutive transmembrane segments (helical) span residues Met1–Thr21, Thr54–Val74, Ala84–Leu104, Val126–Leu146, and Leu165–Ile185.

Belongs to the PlsY family. As to quaternary structure, probably interacts with PlsX.

It localises to the cell inner membrane. It catalyses the reaction an acyl phosphate + sn-glycerol 3-phosphate = a 1-acyl-sn-glycero-3-phosphate + phosphate. It participates in lipid metabolism; phospholipid metabolism. Catalyzes the transfer of an acyl group from acyl-phosphate (acyl-PO(4)) to glycerol-3-phosphate (G3P) to form lysophosphatidic acid (LPA). This enzyme utilizes acyl-phosphate as fatty acyl donor, but not acyl-CoA or acyl-ACP. The protein is Glycerol-3-phosphate acyltransferase of Rippkaea orientalis (strain PCC 8801 / RF-1) (Cyanothece sp. (strain PCC 8801)).